The primary structure comprises 427 residues: Glutamate-1-semialdehyde 2,1-aminomutase (427 aa).

N6-(pyridoxal phosphate)lysine is present on lysine 265.

It belongs to the class-III pyridoxal-phosphate-dependent aminotransferase family. HemL subfamily. As to quaternary structure, homodimer. It depends on pyridoxal 5'-phosphate as a cofactor.

It localises to the cytoplasm. It catalyses the reaction (S)-4-amino-5-oxopentanoate = 5-aminolevulinate. The protein operates within porphyrin-containing compound metabolism; protoporphyrin-IX biosynthesis; 5-aminolevulinate from L-glutamyl-tRNA(Glu): step 2/2. The chain is Glutamate-1-semialdehyde 2,1-aminomutase from Stutzerimonas stutzeri (strain A1501) (Pseudomonas stutzeri).